The primary structure comprises 306 residues: [methyl-Co(III) glycine betaine-specific corrinoid protein]--tetrahydrofolate methyltransferase (306 aa).

This sequence belongs to the MtrH family.

The catalysed reaction is methyl-Co(III)-[glycine betaine-specific corrinoid protein] + (6S)-5,6,7,8-tetrahydrofolate = Co(I)-[glycine betaine-specific corrinoid protein] + (6S)-5-methyl-5,6,7,8-tetrahydrofolate + H(+). Methyltransferase able to catalyze the transfer of a methyl group from methylcobalamin (methylCbl) to tetrahydrofolate (THF) in vitro, to generate methyl-THF and cob(I)alamin. In vivo, the methyl group probably comes from the adjacently encoded methylated corrinoid protein DSY3155. The methyl group may then be ultimately converted to carbon dioxide, and its oxidation would also provide reducing equivalents for anaerobic respiration. Thus, may function in the pathway that allows anaerobic methylotrophic growth of D.hafniense using glycine betaine. The protein is [methyl-Co(III) glycine betaine-specific corrinoid protein]--tetrahydrofolate methyltransferase of Desulfitobacterium hafniense (strain Y51).